Here is a 212-residue protein sequence, read N- to C-terminus: Ion-translocating oxidoreductase complex subunit G (212 aa).

Residues 9–29 (GFLLALFALICTGLVAAVNQQ) traverse the membrane as a helical segment. Thr176 bears the FMN phosphoryl threonine mark.

The protein belongs to the RnfG family. As to quaternary structure, the complex is composed of six subunits: RnfA, RnfB, RnfC, RnfD, RnfE and RnfG. It depends on FMN as a cofactor.

The protein resides in the cell inner membrane. Part of a membrane-bound complex that couples electron transfer with translocation of ions across the membrane. The sequence is that of Ion-translocating oxidoreductase complex subunit G from Shewanella baltica (strain OS223).